Consider the following 601-residue polypeptide: Protein FREE1 (601 aa).

The interval 1–240 (MQQGDYNSYY…SGEYPAFEDS (240 aa)) is disordered. The span at 21-35 (TPNPNPNPNPSPPAP) shows a compositional bias: pro residues. Composition is skewed to polar residues over residues 63–79 (DYSN…QNSE) and 125–155 (LSSY…QHQT). The span at 161-175 (APPPSSAPAPNPNPA) shows a compositional bias: pro residues. The segment covering 176–197 (PYSSSLYSAPPYSSGGSSIPPS) has biased composition (low complexity). Positions 214 to 231 (NRSRSDLGSDLYGKRSDS) are enriched in basic and acidic residues. At Ser-218 the chain carries Phosphoserine. The nuclear export signal stretch occupies residues 338-344 (LDGLRML). The segment at 455 to 515 (DEAVSKCTSC…VCDRCMAEVS (61 aa)) adopts an FYVE-type zinc-finger fold. Cys-461, Cys-464, Cys-477, Cys-480, Cys-485, Cys-488, Cys-507, and Cys-510 together coordinate Zn(2+). The stretch at 527 to 552 (RNVSLQSHEDLARKLQEEMERNRKSS) forms a coiled coil. A phosphoserine mark is found at Ser-530 and Ser-533. The interval 542–561 (QEEMERNRKSSSGLREGSGR) is disordered.

Part of the ESCRT-I complex. Interacts with VPS23A and VPS23B, but not with VPS28 or VPS37. Interacts with IRT1. Interacts with SH3P2. Interacts with SH3P3, but not with SH3P1. Interacts (via N-terminus) with PYL4 and PYR3. Interacts (via C-terminus) with SNRK2D/SNRK2.2, SNRK2I/SNRK2.3, ABF4 and ABI5. Interacts with SINAT1, SINAT2, SINAT3 and SINAT4. Interacts with SINAT5. Component of a phosphoinositide 3-kinase (PI3K) complex containing ATG6, SH3P2 and FREE1. Phosphorylated at Ser-530 and Ser-533 by SNRK2D/SNRK2.2 and SNRK2I/SNRK2.3 in response to abscisic acid (ABA). Phosphorylation is necessary for ABA-induced FREE1 nuclear import. Post-translationally, ubiquitinated by SINAT1, SINAT2, SINAT3 and SINAT4 for subsequent proteasomal degradation. As to expression, ubiquitous. Lowest expression in mature seeds.

The protein localises to the cytoplasm. It is found in the prevacuolar compartment membrane. The protein resides in the late endosome. Its subcellular location is the endosome. It localises to the multivesicular body. The protein localises to the nucleus. Its function is as follows. Endosomal sorting complex required for transport (ESCRT) component regulating multivesicular body (MVB) protein sorting and plant growth. Required for the formation of intra-luminal vesicles (ILVs)in MVBs. Binds to phosphatidylinositol-3-phosphate (PI3P) and ubiquitin. Controls IRT1 recycling to the plasma membrane and impacts the polar delivery of this transporter to the outer plasma membrane domain. Regulates ubiquitin-dependent membrane protein degradation, vacuolar transport, autophagy, and vacuole biogenesis. ESCRT component that binds ubiquitin and regulates vacuolar sorting of proteins. Attenuates abscisic acid (ABA) signaling through RSL1-triggered degradation of the ABA receptors PYR1 and PYL4. Interacts with PYL4 and PYR1, and delivers the ubiquitinated ABA receptors as cargo to the vacuolar degradation pathway. In response to ABA, is phosphorylated by SnRK2 kinases which mediate FREE1 nuclear import. In the nucleus, interacts with the ABA-responsive transcription factors ABF4 and ABI5 to reduce their ability to bind to their cis-regulatory sequences of downstream genes, thus leading to transcriptional inhibition of ABA signaling pathway. Negatively regulates salt stress tolerance via a negative feedback loop involving ABA signaling pathway. The chain is Protein FREE1 from Arabidopsis thaliana (Mouse-ear cress).